We begin with the raw amino-acid sequence, 1380 residues long: DNA-directed RNA polymerase subunit beta (1380 aa).

Belongs to the RNA polymerase beta chain family. As to quaternary structure, the RNAP catalytic core consists of 2 alpha, 1 beta, 1 beta' and 1 omega subunit. When a sigma factor is associated with the core the holoenzyme is formed, which can initiate transcription.

The catalysed reaction is RNA(n) + a ribonucleoside 5'-triphosphate = RNA(n+1) + diphosphate. In terms of biological role, DNA-dependent RNA polymerase catalyzes the transcription of DNA into RNA using the four ribonucleoside triphosphates as substrates. This is DNA-directed RNA polymerase subunit beta from Rhizobium rhizogenes (strain K84 / ATCC BAA-868) (Agrobacterium radiobacter).